An 89-amino-acid polypeptide reads, in one-letter code: Large ribosomal subunit protein bL27 (89 aa).

A disordered region spans residues 1-20 (MAHKKAGGSSRNGRDSESKR).

This sequence belongs to the bacterial ribosomal protein bL27 family.

In Bartonella bacilliformis (strain ATCC 35685 / KC583 / Herrer 020/F12,63), this protein is Large ribosomal subunit protein bL27.